Here is a 243-residue protein sequence, read N- to C-terminus: Interleukin-27 subunit alpha (243 aa).

The N-terminal stretch at 1 to 28 (MGQTAGDLGWRLSLLLLPLLLVQAGVWG) is a signal peptide.

This sequence belongs to the IL-6 superfamily. In terms of assembly, heterodimer with EBI3; not disulfide-linked. This heterodimer is known as interleukin IL-27. In terms of processing, O-glycosylated. Expressed in monocytes and in placenta.

The protein resides in the secreted. Functionally, associates with EBI3 to form the IL-27 interleukin, a heterodimeric cytokine which functions in innate immunity. IL-27 has pro- and anti-inflammatory properties, that can regulate T-helper cell development, suppress T-cell proliferation, stimulate cytotoxic T-cell activity, induce isotype switching in B-cells, and that has diverse effects on innate immune cells. Among its target cells are CD4 T-helper cells which can differentiate in type 1 effector cells (TH1), type 2 effector cells (TH2) and IL17 producing helper T-cells (TH17). It drives rapid clonal expansion of naive but not memory CD4 T-cells. It also strongly synergizes with IL-12 to trigger interferon-gamma/IFN-gamma production of naive CD4 T-cells, binds to the cytokine receptor WSX-1/TCCR which appears to be required but not sufficient for IL-27-mediated signal transduction. IL-27 potentiate the early phase of TH1 response and suppress TH2 and TH17 differentiation. It induces the differentiation of TH1 cells via two distinct pathways, p38 MAPK/TBX21- and ICAM1/ITGAL/ERK-dependent pathways. It also induces STAT1, STAT3, STAT4 and STAT5 phosphorylation and activates TBX21/T-Bet via STAT1 with resulting IL12RB2 up-regulation, an event crucial to TH1 cell commitment. It suppresses the expression of GATA3, the inhibitor TH1 cells development. In CD8 T-cells, it activates STATs as well as GZMB. IL-27 reveals to be a potent inhibitor of TH17 cell development and of IL-17 production. Indeed IL27 alone is also able to inhibit the production of IL17 by CD4 and CD8 T-cells. While IL-27 suppressed the development of pro-inflammatory Th17 cells via STAT1, it inhibits the development of anti-inflammatory inducible regulatory T-cells, iTreg, independently of STAT1. IL-27 also has an effect on cytokine production, it suppresses pro-inflammatory cytokine production such as IL2, IL4, IL5 and IL6 and activates suppressors of cytokine signaling such as SOCS1 and SOCS3. Apart from suppression of cytokine production, IL-27 also antagonizes the effects of some cytokines such as IL6 through direct effects on T-cells. Another important role of IL-27 is its antitumor activity as well as its antiangiogenic activity with activation of production of antiangiogenic chemokines such as IP-10/CXCL10 and MIG/CXCL9. In vein endothelial cells, it induces IRF1/interferon regulatory factor 1 and increase the expression of MHC class II transactivator/CIITA with resulting up-regulation of major histocompatibility complex class II. IL-27 also demonstrates antiviral activity with inhibitory properties on HIV-1 replication. This is Interleukin-27 subunit alpha (IL27) from Homo sapiens (Human).